We begin with the raw amino-acid sequence, 269 residues long: Aegyptin-like protein (269 aa).

The N-terminal stretch at 1–19 is a signal peptide; that stretch reads MKLLLLLASVLCLALIVSA. The disordered stretch occupies residues 19 to 152; it reads ARPSDETTDQ…GGAEGGEESP (134 aa). The segment at 38–148 is GE-rich region which mediates binding of Ca(2+); that stretch reads TSDSYHQEED…AGEEGGAEGG (111 aa). Acidic residues-rich tracts occupy residues 56-73, 98-121, and 131-149; these read GTEDGNSEDDSSELESSS, GEEDEAGEEGEAGEEGEAGEEGGA, and GGADEEGSAGEEGGAEGGE. The mediates binding of host collagen and inhibition of platelet aggregation stretch occupies residues 148–269; it reads GEESPVNTYH…DCIVEKRDSE (122 aa). Intrachain disulfides connect cysteine 208–cysteine 261 and cysteine 230–cysteine 239.

The protein belongs to the aegyptin family. As to expression, female saliva (at protein level). Distal lateral lobes of female salivary gland (at protein level). Low-level expression in male salivary gland. Not detected in female and male carcasses.

It is found in the secreted. Functionally, modulates blood feeding of female mosquitoes on vertebrate hosts. Inhibits collagen-induced platelet aggregation in the host via preventing collagen interaction with its ligands: glycoprotein VI and integrin alpha-2/beta-1 (ITGA2/ITGB1). Inhibits collagen-induced increase of Ca(2+) levels in host platelets. Binds to host collagens. Binds Ca(2+). Prevents a decrease in platelet count in the host blood after collagen injection. In terms of biological role, (Microbial infection) Does not affect the development of Plasmodium berghei parasites in mosquitoes. This Anopheles stephensi (Indo-Pakistan malaria mosquito) protein is Aegyptin-like protein.